The primary structure comprises 896 residues: MNYVGQLAGQVIVTVKELYKGINQATLSGCIDVIVVQQQDGSYQCSPFHVRFGKLGVLRSKEKVIDIEINGSAVDLHMKLGDNGEAFFVEETEEEYEKLPAYLATSPIPTEDQFFKDIDTPLVKSGGDETPSQSSDISHVLETETIFTPSSVKKKKRRRKKYKQDSKKEEQAASAAAEDTCDVGVSSDDDKGAQAARGSSNASLKEEECKEPLLFHSGDHYPLSDGDWSPLETTYPQTACPKSDSELEVKPAESLLRSESHMEWTWGGFPESTKVSKRERSDHHPRTATITPSENTHFRVIPSEDNLISEVEKDASMEDTVCTIVKPKPRALGTQMSDPTSVAELLEPPLESTQISSMLDADHLPNAALAEAPSESKPAAKVDSPSKKKGVHKRSQHQGPDDIYLDDLKGLEPEVAALYFPKSESEPGSRQWPESDTLSGSQSPQSVGSAAADSGTECLSDSAMDLPDVTLSLCGGLSENGEISKEKFMEHIITYHEFAENPGLIDNPNLVIRIYNRYYNWALAAPMILSLQVFQKSLPKATVESWVKDKMPKKSGRWWFWRKRESMTKQLPESKEGKSEAPPASDLPSSSKEPAGARPAENDSSSDEGSQELEESITVDPIPTEPLSHGSTTSYKKSLRLSSDQIAKLKLHDGPNDVVFSITTQYQGTCRCAGTIYLWNWNDKIIISDIDGTITKSDALGQILPQLGKDWTHQGIAKLYHSINENGYKFLYCSARAIGMADMTRGYLHWVNDKGTILPRGPLMLSPSSLFSAFHREVIEKKPEKFKIECLNDIKNLFAPSKQPFYAAFGNRPNDVYAYTQVGVPDCRIFTVNPKGELIQERTKGNKSSYHRLSELVEHVFPLLSKEQNSAFPCPEFSSFCYWRDPIPEVDLDDLS.

The tract at residues 1 to 108 (MNYVGQLAGQ…LPAYLATSPI (108 aa)) is N-LIP. Residue S106 is modified to Phosphoserine. A disordered region spans residues 120 to 208 (TPLVKSGGDE…SSNASLKEEE (89 aa)). Residues 152–162 (VKKKKRRRKKY) are compositionally biased toward basic residues. Positions 153–158 (KKKKRR) match the Nuclear localization signal motif. S174, S186, S187, S243, and S303 each carry phosphoserine. Disordered regions lie at residues 370-405 (AEAPSESKPAAKVDSPSKKKGVHKRSQHQGPDDIYL) and 420-459 (FPKSESEPGSRQWPESDTLSGSQSPQSVGSAAADSGTECL). Residues 387-396 (KKKGVHKRSQ) are compositionally biased toward basic residues. The segment covering 426–448 (EPGSRQWPESDTLSGSQSPQSVG) has biased composition (polar residues). At S566 the chain carries Phosphoserine. Over residues 569–579 (KQLPESKEGKS) the composition is skewed to basic and acidic residues. A disordered region spans residues 569-636 (KQLPESKEGK…LSHGSTTSYK (68 aa)). Positions 604–617 (SSSDEGSQELEESI) are enriched in acidic residues. A C-LIP region spans residues 635-837 (YKKSLRLSSD…RIFTVNPKGE (203 aa)). The DXDXT motif motif lies at 689 to 693 (DIDGT). Residues 700 to 704 (LGQIL) carry the LXXIL motif motif.

The protein belongs to the lipin family. Mg(2+) is required as a cofactor. Expressed in liver, lung, kidney, placenta, spleen, thymus, lymph node, prostate, testes, small intestine, and colon.

The protein resides in the nucleus. The protein localises to the cytoplasm. Its subcellular location is the cytosol. It is found in the endoplasmic reticulum membrane. It catalyses the reaction a 1,2-diacyl-sn-glycero-3-phosphate + H2O = a 1,2-diacyl-sn-glycerol + phosphate. With respect to regulation, inhibited by N-ethylmaleimide. In terms of biological role, acts as a magnesium-dependent phosphatidate phosphatase enzyme which catalyzes the conversion of phosphatidic acid to diacylglycerol during triglyceride, phosphatidylcholine and phosphatidylethanolamine biosynthesis in the endoplasmic reticulum membrane. Plays important roles in controlling the metabolism of fatty acids at different levels. Also acts as a nuclear transcriptional coactivator for PPARGC1A to modulate lipid metabolism. The polypeptide is Phosphatidate phosphatase LPIN2 (Homo sapiens (Human)).